A 478-amino-acid chain; its full sequence is RNA-binding protein 42 (478 aa).

Over residues 1–20 the composition is skewed to low complexity; that stretch reads MASAMAGAGPAPGLPVAGGP. Residues 1 to 33 are disordered; it reads MASAMAGAGPAPGLPVAGGPVVPGPGVGIPGKS. Position 2 is an N-acetylalanine (A2). S133 is subject to Phosphoserine. Asymmetric dimethylarginine is present on residues R151, R156, R166, and R179. Disordered stretches follow at residues 171–207 and 317–354; these read LSSA…MLPP and SLRP…PEKL. Positions 193-205 are enriched in pro residues; sequence PPLPGPPGPPMML. A necessary for interaction with HNRNPK region spans residues 234–478; sequence ELGLGLGLGL…QKEKKKLGLR (245 aa). Residues 343–354 show a composition bias toward basic and acidic residues; sequence GEDKKKGKPEKL. Positions 379–457 constitute an RRM domain; it reads FRIFCGDLGN…RPIKLRKSMW (79 aa).

This sequence belongs to the RRM RBM42 family. Interacts with HNRNPK. Expressed in cell lines (at protein level). Expressed in heart, brain, spleen, lung, liver, skeletal muscle, kidney and testis.

The protein localises to the nucleus. It localises to the cytoplasm. In terms of biological role, binds (via the RRM domain) to the 3'-untranslated region (UTR) of CDKN1A mRNA. The sequence is that of RNA-binding protein 42 (Rbm42) from Mus musculus (Mouse).